The sequence spans 250 residues: 7-cyano-7-deazaguanine synthase (250 aa).

21–31 (FSGGQDSSVCL) serves as a coordination point for ATP. Zn(2+)-binding residues include cysteine 209, cysteine 224, cysteine 227, and cysteine 230.

It belongs to the QueC family. Zn(2+) serves as cofactor.

It carries out the reaction 7-carboxy-7-deazaguanine + NH4(+) + ATP = 7-cyano-7-deazaguanine + ADP + phosphate + H2O + H(+). The protein operates within purine metabolism; 7-cyano-7-deazaguanine biosynthesis. Functionally, catalyzes the ATP-dependent conversion of 7-carboxy-7-deazaguanine (CDG) to 7-cyano-7-deazaguanine (preQ(0)). The polypeptide is 7-cyano-7-deazaguanine synthase (Caulobacter sp. (strain K31)).